The primary structure comprises 347 residues: Isopentenyl-diphosphate delta-isomerase (347 aa).

Residue 9–10 (RK) coordinates substrate. FMN contacts are provided by residues serine 67, 68-70 (SMT), serine 98, and asparagine 127. 98 to 100 (SQR) contributes to the substrate binding site. Glutamine 162 is a substrate binding site. Mg(2+) is bound at residue glutamate 163. FMN contacts are provided by residues lysine 194, threonine 224, 274–276 (GIR), and 295–296 (AA).

The protein belongs to the IPP isomerase type 2 family. Homooctamer. Dimer of tetramers. Requires FMN as cofactor. NADPH serves as cofactor. Mg(2+) is required as a cofactor.

It is found in the cytoplasm. It carries out the reaction isopentenyl diphosphate = dimethylallyl diphosphate. Its function is as follows. Involved in the biosynthesis of isoprenoids. Catalyzes the 1,3-allylic rearrangement of the homoallylic substrate isopentenyl (IPP) to its allylic isomer, dimethylallyl diphosphate (DMAPP). This Cronobacter sakazakii (strain ATCC BAA-894) (Enterobacter sakazakii) protein is Isopentenyl-diphosphate delta-isomerase.